The following is a 534-amino-acid chain: MSSDEEDFNDIYGDDKPTTTEEVKKEEEQNKAGSGTSQLDQLAALQALSSSLNKLNNPNSNNSSSNNSNQDTSSSKQDGTANDKEGSNEDTKNEKKQESATSANANANASSAGPSGLPWEQLQQTMSQFQQPSSQSPPQQQVTQTKEERSKADLSKESCKMFIGGLNWDTTEDNLREYFGKYGTVTDLKIMKDPATGRSRGFGFLSFEKPSSVDEVVKTQHILDGKVIDPKRAIPRDEQDKTGKIFVGGIGPDVRPKEFEEFFSQWGTIIDAQLMLDKDTGQSRGFGFVTYDSADAVDRVCQNKFIDFKDRKIEIKRAEPRHMQQKSSNNGGNNGGNNMNRRGGNFGNQGDFNQMYQNPMMGGYNPMMNPQAMTDYYQKMQEYYQQMQKQTGMDYTQMYQQQMQQMAMMMPGFAMPPNAMTLNQPQQDSNATQGSPAPSDSDNNKSNDVQTIGNTSNTDSGSPPLNLPNGPKGPSQYNDDHNSGYGYNRDRGDRDRNDRDRDYNHRSGGNHRRNGRGGRGGYNRRNNGYHPYNR.

The disordered stretch occupies residues 1–154 (MSSDEEDFND…TKEERSKADL (154 aa)). 2 positions are modified to phosphoserine: serine 2 and serine 3. Residues 13–30 (GDDKPTTTEEVKKEEEQN) are compositionally biased toward basic and acidic residues. Positions 37-78 (SQLDQLAALQALSSSLNKLNNPNSNNSSSNNSNQDTSSSKQD) are enriched in low complexity. 2 positions are modified to phosphoserine: serine 51 and serine 87. Basic and acidic residues predominate over residues 81-98 (ANDKEGSNEDTKNEKKQE). Composition is skewed to low complexity over residues 99 to 112 (SATS…ASSA) and 121 to 144 (QLQQ…QVTQ). Over residues 145-154 (TKEERSKADL) the composition is skewed to basic and acidic residues. RRM domains are found at residues 159–241 (CKMF…EQDK) and 243–320 (GKIF…RAEP). The residue at position 206 (serine 206) is a Phosphoserine. Disordered regions lie at residues 316–354 (KRAE…DFNQ) and 415–534 (MPPN…PYNR). Over residues 336-354 (GNNMNRRGGNFGNQGDFNQ) the composition is skewed to low complexity. Positions 420–459 (MTLNQPQQDSNATQGSPAPSDSDNNKSNDVQTIGNTSNTD) are enriched in polar residues. Threonine 458 carries the phosphothreonine modification. A phosphoserine mark is found at serine 460 and serine 462. The segment covering 460-475 (SGSPPLNLPNGPKGPS) has biased composition (low complexity). Residues 478–505 (NDDHNSGYGYNRDRGDRDRNDRDRDYNH) show a composition bias toward basic and acidic residues. Arginine 519 carries the omega-N-methylarginine modification. The segment covering 523–534 (NRRNNGYHPYNR) has biased composition (low complexity).

As to quaternary structure, interacts with NAM7. Methylated by HMT1. The methylation is required for nuclear export.

The protein localises to the cytoplasm. The protein resides in the nucleus. Its subcellular location is the stress granule. RNA-binding protein, which is involved in the polyadenylation-dependent pre-mRNA 3'-end formation and cooperates with the cleavage factor CFIA complex and the cleavage and polyadenylation factor (CPF) complex. May be involved in regulation of poly(A) site selection. Is involved in nonsense-mediated mRNA decay. Seems to bind to an RNA downstream sequence element (DSE) located 3' of a nonsense codon and may mark the transcript for decay. The chain is Nuclear polyadenylated RNA-binding protein 4 from Saccharomyces cerevisiae (strain ATCC 204508 / S288c) (Baker's yeast).